The sequence spans 208 residues: Small ribosomal subunit protein uS9c (208 aa).

Residues 1–51 (MAVSISSLTSSFASLSFTSNLTPKPQTLPMARTKPFSLSNPAVVKPLVITA) constitute a chloroplast transit peptide. N-acetylthreonine is present on Thr-52. The interval 185-208 (DSRIVERKKPGLKKARKAPQFSKR) is disordered. Positions 194–208 (PGLKKARKAPQFSKR) are enriched in basic residues.

Component of the chloroplast small ribosomal subunit (SSU). Mature 70S chloroplast ribosomes of higher plants consist of a small (30S) and a large (50S) subunit. The 30S small subunit contains 1 molecule of ribosomal RNA (16S rRNA) and 24 different proteins. The 50S large subunit contains 3 rRNA molecules (23S, 5S and 4.5S rRNA) and 33 different proteins. uS9c binds directly to 16S ribosomal RNA. uS9c interacts with translation factor pY (PSRP1).

Its subcellular location is the plastid. It is found in the chloroplast. In terms of biological role, component of the chloroplast ribosome (chloro-ribosome), a dedicated translation machinery responsible for the synthesis of chloroplast genome-encoded proteins, including proteins of the transcription and translation machinery and components of the photosynthetic apparatus. This chain is Small ribosomal subunit protein uS9c (PRPS9), found in Spinacia oleracea (Spinach).